We begin with the raw amino-acid sequence, 151 residues long: 6,7-dimethyl-8-ribityllumazine synthase (151 aa).

5-amino-6-(D-ribitylamino)uracil is bound by residues Phe15, 49 to 51 (AVE), and 73 to 75 (AVI). 78–79 (ET) contributes to the (2S)-2-hydroxy-3-oxobutyl phosphate binding site. His81 acts as the Proton donor in catalysis. A 5-amino-6-(D-ribitylamino)uracil-binding site is contributed by Phe106. (2S)-2-hydroxy-3-oxobutyl phosphate is bound at residue Arg120.

It belongs to the DMRL synthase family. In terms of assembly, forms an icosahedral capsid composed of 60 subunits, arranged as a dodecamer of pentamers.

The catalysed reaction is (2S)-2-hydroxy-3-oxobutyl phosphate + 5-amino-6-(D-ribitylamino)uracil = 6,7-dimethyl-8-(1-D-ribityl)lumazine + phosphate + 2 H2O + H(+). It participates in cofactor biosynthesis; riboflavin biosynthesis; riboflavin from 2-hydroxy-3-oxobutyl phosphate and 5-amino-6-(D-ribitylamino)uracil: step 1/2. Functionally, catalyzes the formation of 6,7-dimethyl-8-ribityllumazine by condensation of 5-amino-6-(D-ribitylamino)uracil with 3,4-dihydroxy-2-butanone 4-phosphate. This is the penultimate step in the biosynthesis of riboflavin. This is 6,7-dimethyl-8-ribityllumazine synthase from Coxiella burnetii (strain Dugway 5J108-111).